We begin with the raw amino-acid sequence, 697 residues long: Probable potassium transporter 4 (697 aa).

Residues 1-29 (MSSSHTVTVSMDVEAGQKNKDKKGISQDL) lie on the Cytoplasmic side of the membrane. A helical membrane pass occupies residues 30–50 (ILAYKTLGVVFGGLVTSPLYV). The Extracellular segment spans residues 51 to 66 (YPSMNLTNPTEEDYLG). The N-linked (GlcNAc...) asparagine glycan is linked to Asn55. A helical membrane pass occupies residues 67 to 87 (IYSIMFWTLTLIGVVKYICIA). The Cytoplasmic portion of the chain corresponds to 88–152 (LNADDHGEGG…FIESSIIARR (65 aa)). The helical transmembrane segment at 153-173 (LLLLTAILGMCMLIGDGILTP) threads the bilayer. Over 174–189 (AISVLSAIDGLRGPFP) the chain is Extracellular. A helical membrane pass occupies residues 190–210 (SVSKPAVEGLSAAILVGLFLL). Residues 211–217 (QKYGTSK) are Cytoplasmic-facing. Residues 218-238 (VSFMFSPIMAAWTFATPVIGV) traverse the membrane as a helical segment. Topologically, residues 239 to 271 (YSIWRYYPGIFKAMSPHYIVRFFMTNQTRGWQL) are extracellular. Asn264 carries an N-linked (GlcNAc...) asparagine glycan. Residues 272 to 292 (LGGTVLCITGAEAMFADLGHF) traverse the membrane as a helical segment. Over 293–300 (SKRSIQIA) the chain is Cytoplasmic. Residues 301–321 (FMSSIYPSLVLTYAGQTAYLI) traverse the membrane as a helical segment. Residues 322–338 (NNVDDFSDGFYKFVPRP) lie on the Extracellular side of the membrane. A helical membrane pass occupies residues 339-359 (VYWPMFIIATLAAIVASQSLI). At 360-390 (SATFSVIKQSVVLDYFPRVKVVHTSKDKEGE) the chain is on the cytoplasmic side. Residues 391 to 411 (VYSPETNYMLMLLCVGVILGF) form a helical membrane-spanning segment. Topologically, residues 412–422 (GDGKDIGNAFG) are extracellular. A helical membrane pass occupies residues 423 to 443 (VVVILVMLITTILLTLVMLII). The Cytoplasmic portion of the chain corresponds to 444 to 447 (WGTH). Residues 448–468 (VVLVALYLVPFLLLEATYVSA) traverse the membrane as a helical segment. Over 469–475 (VCTKILR) the chain is Extracellular. The chain crosses the membrane as a helical span at residues 476 to 496 (GGWVPFAVSVALAAVMFGWYY). Over 497–697 (GRQRKTEYEA…RVEIGMLYKA (201 aa)) the chain is Cytoplasmic.

It belongs to the HAK/KUP transporter (TC 2.A.72.3) family.

It localises to the membrane. Its function is as follows. High-affinity potassium transporter. In Oryza sativa subsp. japonica (Rice), this protein is Probable potassium transporter 4 (HAK4).